The following is a 618-amino-acid chain: Proline--tRNA ligase (618 aa).

This sequence belongs to the class-II aminoacyl-tRNA synthetase family. ProS type 1 subfamily. In terms of assembly, homodimer.

It is found in the cytoplasm. It carries out the reaction tRNA(Pro) + L-proline + ATP = L-prolyl-tRNA(Pro) + AMP + diphosphate. In terms of biological role, catalyzes the attachment of proline to tRNA(Pro) in a two-step reaction: proline is first activated by ATP to form Pro-AMP and then transferred to the acceptor end of tRNA(Pro). As ProRS can inadvertently accommodate and process non-cognate amino acids such as alanine and cysteine, to avoid such errors it has two additional distinct editing activities against alanine. One activity is designated as 'pretransfer' editing and involves the tRNA(Pro)-independent hydrolysis of activated Ala-AMP. The other activity is designated 'posttransfer' editing and involves deacylation of mischarged Ala-tRNA(Pro). The misacylated Cys-tRNA(Pro) is not edited by ProRS. The sequence is that of Proline--tRNA ligase from Streptococcus pyogenes serotype M12 (strain MGAS2096).